Reading from the N-terminus, the 827-residue chain is Glycerol-3-phosphate acyltransferase 1, mitochondrial (827 aa).

Residues 1-87 are Cytoplasmic-facing; the sequence is MEESSVTVGT…FFNPSIPSLG (87 aa). Residues 80 to 120 form an important for mitochondrial localization region; sequence NPSIPSLGLRNVIYINETHTRHRGWLARRLSYILFVQERDV. The stretch at 88–118 is an intramembrane region; the sequence is LRNVIYINETHTRHRGWLARRLSYILFVQER. At 119 to 827 the chain is on the cytoplasmic side; it reads DVHKGMFATS…LEYILSFVVL (709 aa). An HXXXXD motif motif is present at residues 230–235; the sequence is HRSHID. Residues Arg-278, Arg-279, Lys-288, Arg-293, and Arg-328 each coordinate CoA. Ser-380 bears the Phosphoserine mark. A CoA-binding site is contributed by Arg-462. 2 positions are modified to phosphoserine: Ser-687 and Ser-694. Lys-779 and Lys-783 each carry N6-acetyllysine.

Belongs to the GPAT/DAPAT family. In terms of tissue distribution, highest levels in liver, intermediate levels in muscle and kidney, and lowest levels in lung and brain.

It localises to the mitochondrion outer membrane. The enzyme catalyses sn-glycerol 3-phosphate + an acyl-CoA = a 1-acyl-sn-glycero-3-phosphate + CoA. The catalysed reaction is (9Z,12Z)-octadecadienoyl-CoA + sn-glycerol 3-phosphate = 1-(9Z,12Z)-octadecadienoyl-sn-glycero-3-phosphate + CoA. It catalyses the reaction sn-glycerol 3-phosphate + (9Z)-octadecenoyl-CoA = 1-(9Z-octadecenoyl)-sn-glycero-3-phosphate + CoA. It carries out the reaction sn-glycerol 3-phosphate + octadecanoyl-CoA = 1-octadecanoyl-sn-glycero-3-phosphate + CoA. The enzyme catalyses sn-glycerol 3-phosphate + hexadecanoyl-CoA = 1-hexadecanoyl-sn-glycero-3-phosphate + CoA. The catalysed reaction is dodecanoyl-CoA + sn-glycerol 3-phosphate = 1-dodecanoyl-sn-glycerol 3-phosphate + CoA. It catalyses the reaction 1-acyl-sn-glycero-3-phospho-(1'-sn-glycerol) + an acyl-CoA = a 1,2-diacyl-sn-glycero-3-phospho-(1'-sn-glycerol) + CoA. Its pathway is phospholipid metabolism; CDP-diacylglycerol biosynthesis; CDP-diacylglycerol from sn-glycerol 3-phosphate: step 1/3. Functionally, mitochondrial membrane protein that catalyzes the essential first step of biosynthesis of glycerolipids such as triglycerides, phosphatidic acids and lysophosphatidic acids. Esterifies acyl-group from acyl-coenzyme A (acyl-CoA) to the sn-1 position of glycerol-3-phosphate, to produce lysophosphatidic acid. Has a narrow hydrophobic binding cleft that selects for a linear acyl chain. Catalytic activity is higher for substrates with a 16-carbon acyl chain. The chain is Glycerol-3-phosphate acyltransferase 1, mitochondrial from Mus musculus (Mouse).